We begin with the raw amino-acid sequence, 886 residues long: Probable mixed-linked glucan synthase 8 (886 aa).

The next 2 membrane-spanning stretches (helical) occupy residues isoleucine 87 to phenylalanine 107 and glycine 118 to leucine 138. The active site involves aspartate 213. Substrate-binding residues include aspartate 413 and aspartate 415. Aspartate 577 is a catalytic residue. 6 consecutive transmembrane segments (helical) span residues valine 659 to isoleucine 679, phenylalanine 683 to valine 703, isoleucine 723 to glycine 743, leucine 775 to glycine 795, leucine 812 to methionine 832, and tyrosine 840 to isoleucine 860.

This sequence belongs to the glycosyltransferase 2 family. Plant cellulose synthase-like F subfamily.

It is found in the golgi apparatus membrane. Its function is as follows. May catalyze both beta-1,3 and beta-1,4 glycosidic linkage on beta-D-glucan. Essential for (1,3;1,4)-beta-D-glucans synthesis in grasses and cereals (Poaceae). The mixed-linked glucans (which are not present in walls of dicotyledons or most other monocotyledonous plants) are particularly important constituents of the walls of the starchy endosperm and aleurone cells of cereal grains such as oats, wheat, rice and barley. They can account for up to 70% by weight of the wall. The chain is Probable mixed-linked glucan synthase 8 (CSFL8) from Oryza sativa subsp. japonica (Rice).